The chain runs to 91 residues: Non-specific lipid-transfer protein P3 (91 aa).

Intrachain disulfides connect cysteine 3-cysteine 50, cysteine 13-cysteine 27, cysteine 28-cysteine 73, and cysteine 48-cysteine 87.

It is found in the secreted. Functionally, plant non-specific lipid-transfer proteins transfer phospholipids as well as galactolipids across membranes. May play a role in wax or cutin deposition in the cell walls of expanding epidermal cells and certain secretory tissues. The protein is Non-specific lipid-transfer protein P3 of Vitis sp. (Grape).